The following is a 202-amino-acid chain: Na(+)-translocating NADH-quinone reductase subunit E (202 aa).

6 helical membrane passes run Ser11–Val31, Ile35–Ala55, Phe81–Val101, Gly114–Ile134, Val144–Val164, and Leu180–Ile200.

Belongs to the NqrDE/RnfAE family. In terms of assembly, composed of six subunits; NqrA, NqrB, NqrC, NqrD, NqrE and NqrF.

It localises to the cell inner membrane. The enzyme catalyses a ubiquinone + n Na(+)(in) + NADH + H(+) = a ubiquinol + n Na(+)(out) + NAD(+). Functionally, NQR complex catalyzes the reduction of ubiquinone-1 to ubiquinol by two successive reactions, coupled with the transport of Na(+) ions from the cytoplasm to the periplasm. NqrA to NqrE are probably involved in the second step, the conversion of ubisemiquinone to ubiquinol. The protein is Na(+)-translocating NADH-quinone reductase subunit E of Methylococcus capsulatus (strain ATCC 33009 / NCIMB 11132 / Bath).